The primary structure comprises 211 residues: Orotidine 5'-phosphate decarboxylase (211 aa).

Residues D7, K29, 57-66, S109, 162-172, G185, and R186 each bind substrate; these read DLKLADIPNT and PGIGAQGGSPV. K59 acts as the Proton donor in catalysis.

This sequence belongs to the OMP decarboxylase family. Type 1 subfamily. Homodimer.

The enzyme catalyses orotidine 5'-phosphate + H(+) = UMP + CO2. The protein operates within pyrimidine metabolism; UMP biosynthesis via de novo pathway; UMP from orotate: step 2/2. In terms of biological role, catalyzes the decarboxylation of orotidine 5'-monophosphate (OMP) to uridine 5'-monophosphate (UMP). This chain is Orotidine 5'-phosphate decarboxylase, found in Pyrococcus furiosus (strain ATCC 43587 / DSM 3638 / JCM 8422 / Vc1).